Reading from the N-terminus, the 1315-residue chain is Myopalladin (1315 aa).

4 disordered regions span residues 19–60, 81–145, 166–204, and 230–266; these read SYLA…DLPD, INHD…TQSK, HSSK…TERR, and EAKR…LGQP. Basic and acidic residues-rich tracts occupy residues 23 to 35 and 84 to 104; these read ETRH…RSRA and DPLE…DQTK. Residues Ser99 and Ser129 each carry the phosphoserine modification. Positions 166–180 are enriched in basic residues; it reads HSSKRIRPRACKNHK. Residues 184–199 show a composition bias toward polar residues; sequence ESQNKVLQENSPTFSD. Positions 219 to 240 form a coiled coil; the sequence is DNELNHAIEQREAKRREAELAA. Thr249 carries the post-translational modification Phosphothreonine. The 91-residue stretch at 267–357 folds into the Ig-like 1 domain; that stretch reads PRFTQKLRSR…DSTSAEIYIE (91 aa). A disulfide bridge connects residues Cys288 and Cys339. A disordered region spans residues 359–392; sequence VSSSDSEGDPNKEEMNRIQKPNEVSSPPTTSAAI. Residues 432–528 form the Ig-like 2 domain; it reads PVFTKMLQNL…GTVSSIAQLD (97 aa). Cys453 and Cys512 are joined by a disulfide. 3 disordered regions span residues 535 to 652, 674 to 704, and 725 to 747; these read ISDN…VLAK, LQNT…SSKQ, and SSTS…NTPQ. The segment covering 609-623 has biased composition (polar residues); that stretch reads SSGSGAANTSQTRPN. Ser641 is modified (phosphoserine). The segment covering 725–741 has biased composition (low complexity); that stretch reads SSTSTATVSPSSSPVFT. A Phosphoserine modification is found at Ser754. 2 disordered regions span residues 762-814 and 840-865; these read HPST…TPVS and NAMG…KAPQ. Positions 779-790 are enriched in pro residues; the sequence is PAPPSPAEPAAP. Phosphoserine is present on residues Ser809 and Ser814. Ser903 and Ser924 each carry phosphoserine. Ig-like domains lie at 941-1025, 1068-1157, and 1167-1257; these read PIFD…GRIS, PHFL…LELT, and PVIL…ARLD. The cysteines at positions 1089 and 1141 are disulfide-linked.

It belongs to the myotilin/palladin family. In terms of assembly, interacts with TTN/titin, NEB, NEBL, ACTN2 and CARP.

Its subcellular location is the cytoplasm. The protein localises to the nucleus. The protein resides in the myofibril. It is found in the sarcomere. It localises to the z line. Functionally, component of the sarcomere that tethers together nebulin (skeletal muscle) and nebulette (cardiac muscle) to alpha-actinin, at the Z lines. The polypeptide is Myopalladin (Mypn) (Mus musculus (Mouse)).